A 362-amino-acid polypeptide reads, in one-letter code: UDP-N-acetylglucosamine--N-acetylmuramyl-(pentapeptide) pyrophosphoryl-undecaprenol N-acetylglucosamine transferase (362 aa).

Residues 15–17 (TGG), N127, R165, S191, I247, 266–271 (ALTVSE), and Q292 contribute to the UDP-N-acetyl-alpha-D-glucosamine site.

It belongs to the glycosyltransferase 28 family. MurG subfamily.

The protein resides in the cell inner membrane. It catalyses the reaction di-trans,octa-cis-undecaprenyl diphospho-N-acetyl-alpha-D-muramoyl-L-alanyl-D-glutamyl-meso-2,6-diaminopimeloyl-D-alanyl-D-alanine + UDP-N-acetyl-alpha-D-glucosamine = di-trans,octa-cis-undecaprenyl diphospho-[N-acetyl-alpha-D-glucosaminyl-(1-&gt;4)]-N-acetyl-alpha-D-muramoyl-L-alanyl-D-glutamyl-meso-2,6-diaminopimeloyl-D-alanyl-D-alanine + UDP + H(+). It participates in cell wall biogenesis; peptidoglycan biosynthesis. Cell wall formation. Catalyzes the transfer of a GlcNAc subunit on undecaprenyl-pyrophosphoryl-MurNAc-pentapeptide (lipid intermediate I) to form undecaprenyl-pyrophosphoryl-MurNAc-(pentapeptide)GlcNAc (lipid intermediate II). This Shewanella baltica (strain OS155 / ATCC BAA-1091) protein is UDP-N-acetylglucosamine--N-acetylmuramyl-(pentapeptide) pyrophosphoryl-undecaprenol N-acetylglucosamine transferase.